The primary structure comprises 241 residues: tRNA (guanine-N(1)-)-methyltransferase (241 aa).

S-adenosyl-L-methionine contacts are provided by residues Gly108 and 127–132; that span reads LGDYVL.

Belongs to the RNA methyltransferase TrmD family. As to quaternary structure, homodimer.

It is found in the cytoplasm. The catalysed reaction is guanosine(37) in tRNA + S-adenosyl-L-methionine = N(1)-methylguanosine(37) in tRNA + S-adenosyl-L-homocysteine + H(+). Its function is as follows. Specifically methylates guanosine-37 in various tRNAs. This chain is tRNA (guanine-N(1)-)-methyltransferase, found in Streptococcus suis (strain 98HAH33).